The sequence spans 548 residues: Membrane protein insertase YidC (548 aa).

Residues 6–26 (NLLVIALLFVSFMIWQAWEQD) form a helical membrane-spanning segment. The tract at residues 28 to 58 (NPQPQQQQTTQTTTTAAGSAADQGVPASGQG) is disordered. Residues 29–42 (PQPQQQQTTQTTTT) show a composition bias toward low complexity. Transmembrane regions (helical) follow at residues 350-370 (FLGN…GIMY), 420-440 (LGGC…YYML), 458-478 (LSAQ…MFFI), and 499-519 (PVIF…YYIV).

It belongs to the OXA1/ALB3/YidC family. Type 1 subfamily. As to quaternary structure, interacts with the Sec translocase complex via SecD. Specifically interacts with transmembrane segments of nascent integral membrane proteins during membrane integration.

The protein localises to the cell inner membrane. In terms of biological role, required for the insertion and/or proper folding and/or complex formation of integral membrane proteins into the membrane. Involved in integration of membrane proteins that insert both dependently and independently of the Sec translocase complex, as well as at least some lipoproteins. Aids folding of multispanning membrane proteins. In Enterobacter sp. (strain 638), this protein is Membrane protein insertase YidC.